Consider the following 354-residue polypeptide: Dihydroflavonol 4-reductase (354 aa).

K44 and Y163 together coordinate NADP(+).

Belongs to the NAD(P)-dependent epimerase/dehydratase family. Dihydroflavonol-4-reductase subfamily.

The enzyme catalyses a (2R,3S,4S)-leucoanthocyanidin + NADP(+) = a (2R,3R)-dihydroflavonol + NADPH + H(+). The catalysed reaction is (2S)-flavan-4-ol + NADP(+) = (2S)-flavanone + NADPH + H(+). The protein operates within pigment biosynthesis; anthocyanin biosynthesis. Bifunctional enzyme involved in flavonoid metabolism. This chain is Dihydroflavonol 4-reductase (ANT18), found in Hordeum vulgare (Barley).